The chain runs to 198 residues: Protein GrpE (198 aa).

The tract at residues 1–32 (MTTEKETATPADVEVASQEEQIDQTTEAQVEE) is disordered.

The protein belongs to the GrpE family. Homodimer.

The protein resides in the cytoplasm. Functionally, participates actively in the response to hyperosmotic and heat shock by preventing the aggregation of stress-denatured proteins, in association with DnaK and GrpE. It is the nucleotide exchange factor for DnaK and may function as a thermosensor. Unfolded proteins bind initially to DnaJ; upon interaction with the DnaJ-bound protein, DnaK hydrolyzes its bound ATP, resulting in the formation of a stable complex. GrpE releases ADP from DnaK; ATP binding to DnaK triggers the release of the substrate protein, thus completing the reaction cycle. Several rounds of ATP-dependent interactions between DnaJ, DnaK and GrpE are required for fully efficient folding. The sequence is that of Protein GrpE from Haemophilus ducreyi (strain 35000HP / ATCC 700724).